A 346-amino-acid chain; its full sequence is Endosome-associated-trafficking regulator 1 (346 aa).

The span at 46–67 shows a compositional bias: polar residues; it reads FVSSNSKRAFSKDSNQSTTQFR. Disordered regions lie at residues 46–77, 93–129, and 153–173; these read FVSS…DGNL, LQED…GDES, and SPPA…SDSE. Positions 170-317 form a coiled coil; the sequence is SDSEEGLRLL…SGAQSSIKQL (148 aa).

This sequence belongs to the ENTR1 family.

It localises to the cytoplasm. It is found in the early endosome. Its subcellular location is the endosome. The protein resides in the recycling endosome. The protein localises to the midbody. It localises to the cytoskeleton. It is found in the microtubule organizing center. Its subcellular location is the centrosome. The protein resides in the cilium basal body. Its function is as follows. Endosome-associated protein that plays a role in membrane receptor sorting, cytokinesis and ciliogenesis. The chain is Endosome-associated-trafficking regulator 1 from Xenopus tropicalis (Western clawed frog).